We begin with the raw amino-acid sequence, 419 residues long: 3-isopropylmalate dehydratase large subunit (419 aa).

Positions 301, 361, and 364 each coordinate [4Fe-4S] cluster.

This sequence belongs to the aconitase/IPM isomerase family. LeuC type 2 subfamily. In terms of assembly, heterodimer of LeuC and LeuD. [4Fe-4S] cluster serves as cofactor.

It catalyses the reaction (2R,3S)-3-isopropylmalate = (2S)-2-isopropylmalate. It participates in amino-acid biosynthesis; L-leucine biosynthesis; L-leucine from 3-methyl-2-oxobutanoate: step 2/4. Its function is as follows. Catalyzes the isomerization between 2-isopropylmalate and 3-isopropylmalate, via the formation of 2-isopropylmaleate. The sequence is that of 3-isopropylmalate dehydratase large subunit from Campylobacter hominis (strain ATCC BAA-381 / DSM 21671 / CCUG 45161 / LMG 19568 / NCTC 13146 / CH001A).